Here is a 414-residue protein sequence, read N- to C-terminus: D-mannose isomerase (414 aa).

Catalysis depends on proton donor/acceptor residues histidine 255 and histidine 390.

It belongs to the N-acylglucosamine 2-epimerase family. As to quaternary structure, monomer.

The enzyme catalyses D-mannose = D-fructose. Its activity is regulated as follows. Strongly inhibited by Ag(2+), Cu(2+) and cetyltrimethyl ammonium bromide (CTAB). Its function is as follows. Catalyzes the reversible isomerization of D-mannose to D-fructose. Shows high specific activity towards mannose and fructose, and has no detectable activity towards other monosaccharides and disaccharides. This is D-mannose isomerase from Pseudomonas cannabina pv. alisalensis.